The primary structure comprises 259 residues: Hemin import ATP-binding protein HmuV (259 aa).

The 237-residue stretch at 6–242 (IQGRDLCVTY…ERIEQVYGYQ (237 aa)) folds into the ABC transporter domain. 38 to 45 (GPNGAGKS) serves as a coordination point for ATP.

This sequence belongs to the ABC transporter superfamily. Heme (hemin) importer (TC 3.A.1.14.5) family. As to quaternary structure, the complex is composed of two ATP-binding proteins (HmuV), two transmembrane proteins (HmuU) and a solute-binding protein (HmuT).

The protein localises to the cell inner membrane. Functionally, part of the ABC transporter complex HmuTUV involved in hemin import. Responsible for energy coupling to the transport system. The protein is Hemin import ATP-binding protein HmuV of Vibrio cholerae serotype O1 (strain ATCC 39315 / El Tor Inaba N16961).